The following is a 391-amino-acid chain: Inactive polyketide synthase 2 (391 aa).

Cys164 is an active-site residue.

The protein belongs to the thiolase-like superfamily. Chalcone/stilbene synthases family. Homodimer.

In Rubus idaeus (Raspberry), this protein is Inactive polyketide synthase 2 (PKS2).